The chain runs to 383 residues: Dual-specificity RNA methyltransferase RlmN (383 aa).

The active-site Proton acceptor is the E94. The Radical SAM core domain occupies 100 to 339 (DGDRATLCVS…VTVRRTRGDD (240 aa)). A disulfide bridge connects residues C107 and C344. Positions 114, 118, and 121 each coordinate [4Fe-4S] cluster. S-adenosyl-L-methionine-binding positions include 168-169 (GE), S200, 222-224 (SLH), and N301. C344 acts as the S-methylcysteine intermediate in catalysis.

The protein belongs to the radical SAM superfamily. RlmN family. It depends on [4Fe-4S] cluster as a cofactor.

It is found in the cytoplasm. It catalyses the reaction adenosine(2503) in 23S rRNA + 2 reduced [2Fe-2S]-[ferredoxin] + 2 S-adenosyl-L-methionine = 2-methyladenosine(2503) in 23S rRNA + 5'-deoxyadenosine + L-methionine + 2 oxidized [2Fe-2S]-[ferredoxin] + S-adenosyl-L-homocysteine. It carries out the reaction adenosine(37) in tRNA + 2 reduced [2Fe-2S]-[ferredoxin] + 2 S-adenosyl-L-methionine = 2-methyladenosine(37) in tRNA + 5'-deoxyadenosine + L-methionine + 2 oxidized [2Fe-2S]-[ferredoxin] + S-adenosyl-L-homocysteine. Its function is as follows. Specifically methylates position 2 of adenine 2503 in 23S rRNA and position 2 of adenine 37 in tRNAs. m2A2503 modification seems to play a crucial role in the proofreading step occurring at the peptidyl transferase center and thus would serve to optimize ribosomal fidelity. The protein is Dual-specificity RNA methyltransferase RlmN of Aliivibrio salmonicida (strain LFI1238) (Vibrio salmonicida (strain LFI1238)).